The chain runs to 183 residues: Interleukin-36 beta (183 aa).

The propeptide occupies 1-30 (MMAFPPQSCVHVLPPKSIQMWEPNHNTMHG).

Belongs to the IL-1 family. In terms of assembly, interacts with cargo receptor TMED10; the interaction mediates the translocation from the cytoplasm into the ERGIC (endoplasmic reticulum-Golgi intermediate compartment) and thereby secretion. Post-translationally, N-terminal truncation leads to a dramatic enhancement of its activity (&gt;1000-fold).

The protein resides in the cytoplasm. Its subcellular location is the secreted. Its function is as follows. Cytokine that binds to and signals through the IL1RL2/IL-36R receptor which in turn activates NF-kappa-B and MAPK signaling pathways in target cells linked to a pro-inflammatory response. Part of the IL-36 signaling system that is thought to be present in epithelial barriers and to take part in local inflammatory response; similar to the IL-1 system with which it shares the coreceptor IL1RAP. Stimulates production of interleukin-6 and interleukin-8 in synovial fibrobasts, articular chondrocytes and mature adipocytes. Induces expression of a number of antimicrobial peptides including beta-defensin 4 and beta-defensin 103 as well as a number of matrix metalloproteases. Seems to be involved in skin inflammatory response by acting on keratinocytes, dendritic cells and indirectly on T-cells to drive tissue infiltration, cell maturation and cell proliferation. Induces the production of pro-inflammatory cytokines in bone marrow-derived dendritic cells (BMDCs), including IL-12, Il-1 beta, IL-6, TNF-alpha and IL-23, and activates p38 MAPK phosphorylation in BMDCs. Involved in dendritic cell maturation by stimulating the surface expression of CD80, CD86 and MHC class II. Induces the production of IFN-gamma, IL-4 and IL-17 by T-helper 1 (Th1) cells, cultured CD4(+) T-cells and splenocytes. This is Interleukin-36 beta from Mus musculus (Mouse).